The following is a 396-amino-acid chain: Multidrug efflux protein YfmO (396 aa).

12 helical membrane-spanning segments follow: residues 20–40 (VWAV…VDPI), 56–76 (SLLF…SGAI), 80–100 (IGAK…AGLG), 114–134 (GGWG…IVGV), 142–162 (AIIL…LAGG), 171–191 (APFF…SFML), 214–234 (GLLT…ILLA), 249–269 (YVFF…APLV), 278–298 (SLVV…IWTD), 301–321 (TLII…NTIM), 339–359 (AYSS…GMLS), and 364–384 (ASTP…VLLM).

The protein belongs to the major facilitator superfamily.

The protein resides in the cell membrane. Its function is as follows. Acts to efflux copper or a copper complex. It is possible that YfmO could contribute to copper resistance. This chain is Multidrug efflux protein YfmO (yfmO), found in Bacillus subtilis (strain 168).